Reading from the N-terminus, the 300-residue chain is Free fatty acid receptor 1 (300 aa).

The Extracellular segment spans residues 1 to 8; the sequence is MALSPQLF. Residues 9–31 traverse the membrane as a helical segment; that stretch reads FALYVSAFALGFPLNLLAIRGAV. The Cytoplasmic segment spans residues 32-41; it reads ARARLRLTPN. The helical transmembrane segment at 42-64 threads the bilayer; that stretch reads LVYTLHLACSDLLLAITLPVKAV. Topologically, residues 65–79 are extracellular; that stretch reads EALASGAWPLPLPLC. An intrachain disulfide couples C79 to C170. Residues 80–101 form a helical membrane-spanning segment; sequence PVFVLVHFAPLYAGGGFLAALS. Topologically, residues 102–121 are cytoplasmic; that stretch reads AGRYLGAAFPFGYQAVRRPR. Residues 122–142 form a helical membrane-spanning segment; sequence YSWGVCVAIWALVLCHMGLVL. The Extracellular segment spans residues 143-178; sequence GLEAPGGWLNTTSSSLGINTPVNGSPVCLEAWDPNS. N152 is a glycosylation site (N-linked (GlcNAc...) asparagine). Residues 179 to 200 traverse the membrane as a helical segment; it reads ARPARLSFSILLFFVPLVITAF. Topologically, residues 201 to 223 are cytoplasmic; the sequence is CYVGCLRALAHSGLSHKRKLRAA. The helical transmembrane segment at 224–248 threads the bilayer; that stretch reads WAAGGAFLTLLLCLGPYNASNVASF. Over 249–256 the chain is Extracellular; it reads VNPDLGGS. A helical membrane pass occupies residues 257-279; it reads WRKLGLITGSWSVVLNPLVTGYL. At 280 to 300 the chain is on the cytoplasmic side; the sequence is GASPGRGTVCTTRTQGGTIQK.

This sequence belongs to the G-protein coupled receptor 1 family.

It localises to the cell membrane. G-protein coupled receptor for medium and long chain saturated and unsaturated fatty acids that plays an important role in glucose homeostasis. Fatty acid binding increases glucose-stimulated insulin secretion, and may also enhance the secretion of glucagon-like peptide 1 (GLP-1). May also play a role in bone homeostasis; receptor signaling activates pathways that inhibit osteoclast differentiation. Ligand binding leads to a conformation change that triggers signaling via G-proteins that activate phospholipase C, leading to an increase of the intracellular calcium concentration. Seems to act through a G(q) and G(i)-mediated pathway. Mediates the anti-inflammatory effects of omega-3 polyunsaturated fatty acids (PUFAs) via inhibition of NLRP3 inflammasome activation. The polypeptide is Free fatty acid receptor 1 (FFAR1) (Mesocricetus auratus (Golden hamster)).